A 1918-amino-acid polypeptide reads, in one-letter code: MAHLKLDTLHVQRSPRGSRRSSPSSGRSSACSSGSISPVPIIPIISISHDGDESESESEIETEPVRLFQRRMSTKCTNNLAAIIKEGFLLKHTWSFQRWRRRYFRLKRNMLFYAKDEKCDVFDDIDLSDLCYFECGIKNVNHSFQIITPTRSLVLCAESRREMEDWLGGLKTATAPQRPRGDSFLIEQHDILSNHHHWYATSHARPTYCNVCRDALSGVTSHGLSCEVCKCKVHKRCAAKSIANCKWTTLASVGKDIIEQADGSIIMPHQWMEGNLPVSSMCAVCKKTCGSVLRLQDWRCLWCRATVHVACRPQMAVACPIGPAKLSVVPPTSVHSISTDDAWDVASPKGNFSPLLVFVNSKSGDNQGVKFLRRFKQLLNPAQVFDLISTGPSLGLRLFRHFEMFRILVCSGDGSVGWVLSEIDRFNMHKQCQVAVMPLGTGNDLARVLGWGSSCDDDTHLPQILERYESASTKMLDRWSIMVFEKAIPVPKTPKMSISTEQEAMLTGMVTSANHHLRFIVETNDTQTLISSTRNLCDTVDDLVCRISEHHKEDEQLAVKCDILRQKLNMLLDALQEEEIGAHSGDDLIATIRSLITRSIPVTPGSNAYLLNPNISIEKTEKDQINTKERRNSRSLRSSEKEALQCRANSVKRAIYNVVEHSEPGRPKRYQRKLSITPFEALKLPTTASGESTPCTSPLPIIPPINIISPTMETSRLTCISPLPDTRRDSVDENFFNSINLPAPRQFADSRRSSGVPEVIQEIEEGANGETVYRRSRMSLTGGANIDDAGNRLSPCSDGGENTPTERKVDFLRVPIHTGEPIVDPLCDYRPHEVFERTYYMTREMDKDKEKDKEKEKEKTAEIEEENDKCVEKLGSIPAEKLVHTCNLQVPGVVVTPNPQNVYSSASITIIDTDAQTTTEQSSSDDLGGEASDVLSAISNEECSVASEIFDKQDAGQTVGDIIQNMDASNFTHIDSPETSDETEAMPGESLMDDISSVLGHDITYALQDNTLTDDTTTLCSEHAGPPKPPRKKSLSALSRTQAHPRRRNSSPPRTARLARMDSDDNPQQFGFENIVFEIDNRCDDQKMREPPRYCSLAQFVEGNDIARQSFKQLMLEQHRGGDNDIESPEQQQAPTNKGAHLLATTSEDELSTQTAIKIEIHDIDATVRSINSSMKPNTILTTSTSPTKKSGHGQDISVVVRPPTPLRGDSIKPTVSLLPVSSGGAMAVSMTCSGMLGVRAMNASEIRRHSSHAPSLAVREFDKDKDRRHSGFNPNQLTLDPEHARFLSSSPAASRRISCGSLFKKKNKKIATKRSYGLFSVRFFVVAEPDFRLATLALIRPLIPLPNEALPNLQTLKGSKSSLFMGSTLFGFDHLASAERDKEERGGKDKDKTPTEEANRKLPIINPLVRLPNWPNLANGGGFISKCLLANADTLCAAVSPLMDPDETLLAGYHEKCVMNNYFGIGIDAKISLDFHNKREEHPEKCRSRARNYMWYGVLGSKQLLQKTCKNLEQRVQLECDGQRIPLPELQGIVILNIPSFMGGTNFWGSSTKKDDIFLPPSFDDRVLEVVAVFGSVQMAASRLINLQHHRIAQCQSVQINILGDEEIPIQVDGEAWLQPPGMIRILHKNRVQMLCRNRSLELSLKSWHEKQRQHSISIQRDASSTASEHANSTDEVISERECYVLLNFIEAVSSLVKWVKFLIISHPALQHDLYEVACRASEALESIHPQGKLLEGPSLRTKLVEVIDSSRQLYDDACTLLRDRGHSLILREDLETKLSAALANMEMELKKCSVQKCIDGKLRAYFNVLAPNEESDGRRKSRPFWVRLRSGSTAGQQVFKPPLTNTREAANNWSVNEVVTWLETMQLSEYVDSFLKNDIRGKELLTLGRRDLKDLGVVKVGHVKRILQAIKDLSEN.

Residues 1 to 10 show a composition bias toward basic and acidic residues; the sequence is MAHLKLDTLH. A disordered region spans residues 1 to 37; that stretch reads MAHLKLDTLHVQRSPRGSRRSSPSSGRSSACSSGSIS. Low complexity predominate over residues 20-37; the sequence is RSSPSSGRSSACSSGSIS. The PH domain maps to 82–175; sequence AIIKEGFLLK…WLGGLKTATA (94 aa). 2 Phorbol-ester/DAG-type zinc fingers span residues 195–245 and 268–319; these read HHHW…IANC and PHQW…AVAC. The region spanning 350–486 is the DAGKc domain; sequence GNFSPLLVFV…DRWSIMVFEK (137 aa). 4 disordered regions span residues 783 to 805, 1017 to 1067, 1177 to 1212, and 1380 to 1399; these read GANIDDAGNRLSPCSDGGENTPT, TTLC…DDNP, PNTILTTSTSPTKKSGHGQDISVVVRPPTPLRGDSI, and ERDKEERGGKDKDKTPTEEA. Residues 1177–1189 are compositionally biased toward polar residues; that stretch reads PNTILTTSTSPTK. The 64-residue stretch at 1855 to 1918 folds into the SAM domain; sequence WSVNEVVTWL…LQAIKDLSEN (64 aa).

It belongs to the eukaryotic diacylglycerol kinase family.

It localises to the cytoplasm. It catalyses the reaction a 1,2-diacyl-sn-glycerol + ATP = a 1,2-diacyl-sn-glycero-3-phosphate + ADP + H(+). In terms of biological role, phosphorylates diacylglycerol (DAG) to generate phosphatidic acid (PA). This Drosophila erecta (Fruit fly) protein is Diacylglycerol kinase eta.